The sequence spans 541 residues: Beta-hexosaminidase subunit A2 (541 aa).

An N-terminal signal peptide occupies residues 1–21 (MINKFLTIFLIFSIVIIKVLS). Glu314 (proton donor) is an active-site residue. Residues Asn322, Asn336, Asn356, Asn435, and Asn483 are each glycosylated (N-linked (GlcNAc...) asparagine).

It belongs to the glycosyl hydrolase 20 family.

The protein resides in the lysosome. The enzyme catalyses Hydrolysis of terminal non-reducing N-acetyl-D-hexosamine residues in N-acetyl-beta-D-hexosaminides.. In terms of biological role, responsible for the degradation of GM2 gangliosides, and a variety of other molecules containing terminal N-acetyl hexosamines. This is Beta-hexosaminidase subunit A2 (hexa2) from Dictyostelium discoideum (Social amoeba).